We begin with the raw amino-acid sequence, 357 residues long: Meiotic driver wtf9 (357 aa).

The interval 1–39 is disordered; the sequence is MKNKYYPLRSSMDEMSAKNDNEIDLEKGPLPEYNSEDGS. Residues 11 to 29 are compositionally biased toward basic and acidic residues; that stretch reads SMDEMSAKNDNEIDLEKGP. Transmembrane regions (helical) follow at residues 89–109, 119–139, 149–169, 198–218, 232–252, 256–276, and 286–306; these read LLISVLAVIVVFFTAWVCVNP, AFFVTIGITCPILLITIFCFF, CIKVTVIFLAQCVKVTVISLA, VVIIWLLWVVICYTLFLRSKF, CSISAALLLFLLYVRLPFWTL, FSGLFQVLGVQSCVVIVTKGL, and ATGYEIEASSLFVIGNFLFFY.

Belongs to the WTF family. Homomer. Forms protein aggregates. The two isoforms can interact with each other and with themselves. High sequence similarity is required for their interaction.

The protein localises to the spore membrane. The protein resides in the vacuole membrane. It localises to the ascus epiplasm. Its subcellular location is the cytoplasm. It is found in the endoplasmic reticulum membrane. Its function is as follows. Promotes unequal transmission of alleles from the parental zygote to progeny spores by acting as poison/antidote system where the poison and antidote proteins are produced from the same locus; the poison component is trans-acting and targets all spores within an ascus whereas the antidote component is spore-specific, leading to poisoning of all progeny that do not inherit the allele. Localizes isoform 2 to the vacuole thereby facilitating its degradation. Functionally, forms toxic aggregates that disrupt spore maturation. The sequence is that of Meiotic driver wtf9 from Schizosaccharomyces kambucha (Fission yeast).